A 214-amino-acid polypeptide reads, in one-letter code: Type 4 apparatus protein DotN (214 aa).

Zn(2+) contacts are provided by Cys52, Cys55, Cys84, and Cys87.

In terms of assembly, the T4BSS is a complex nanomachine composed of several subcomplexes. This subunit is part of the Type IV Coupling Complex (T4CC), a subcomplex composed of the DotLMNYZ core and the IcmSW-LvgA adapter subunits, linked by the C-terminal tail of DotL. Six DotLMNYZ hetero-pentameric units may assemble into a hexameric nanomachine, forming an inner membrane channel for effectors to pass through. Interacts directly with DotL. Interacts with DotZ.

The protein resides in the cytoplasm. In terms of biological role, component of the Dot/Icm type IVB secretion system (T4BSS), which is used to inject bacterial effector proteins into eukaryotic host cells. Part of a subcomplex which recruits effector proteins and delivers them to the core transmembrane subcomplex. This Legionella pneumophila subsp. pneumophila (strain Philadelphia 1 / ATCC 33152 / DSM 7513) protein is Type 4 apparatus protein DotN.